Here is a 76-residue protein sequence, read N- to C-terminus: uncharacterized protein (76 aa).

The helical transmembrane segment at 18–38 threads the bilayer; sequence FISALFFFNAVCIVSDNLLII.

It is found in the cell membrane. This is an uncharacterized protein from Escherichia coli O6:H1 (strain CFT073 / ATCC 700928 / UPEC).